The sequence spans 501 residues: G protein-activated inward rectifier potassium channel 1 (501 aa).

Positions 1–40 (MSALRRKFGDDYQVVTTSSSGSGLQPQGPGQDPQQQLVPK) are disordered. At 1–80 (MSALRRKFGD…LFTTLVDLKW (80 aa)) the chain is on the cytoplasmic side. Positions 18–38 (SSSGSGLQPQGPGQDPQQQLV) are enriched in low complexity. A helical transmembrane segment spans residues 81 to 105 (RWNLFIFILTYTVAWLFMASMWWVI). The Extracellular segment spans residues 106–129 (AYTRGDLNKAHVGNYTPCVANVYN). N-linked (GlcNAc...) asparagine glycosylation occurs at N119. The segment at residues 130–141 (FPSAFLFFIETE) is an intramembrane region (helical; Pore-forming). Positions 142–148 (ATIGYGY) form an intramembrane region, pore-forming. A Selectivity filter motif is present at residues 143-148 (TIGYGY). Residues 149–157 (RYITDKCPE) lie on the Extracellular side of the membrane. The helical transmembrane segment at 158–179 (GIILFLFQSILGSIVDAFLIGC) threads the bilayer. Topologically, residues 180 to 501 (MFIKMSQPKK…LRKMNSDRFT (322 aa)) are cytoplasmic. The segment at 182–209 (IKMSQPKKRAETLMFSEHAVISMRDGKL) is polyphosphoinositide (PIP2)-binding. Residues S385 and S424 each carry the phosphoserine modification.

The protein belongs to the inward rectifier-type potassium channel (TC 1.A.2.1) family. KCNJ3 subfamily. As to quaternary structure, associates with KCNJ5/GIRK4 or KCNJ6/GIRK2 to form a G-protein activated heteromultimer pore-forming unit. The resulting inward current is much larger. Associates with KCNJ9/GIRK3 to form a G-protein activated heteromultimer pore-forming unit.

Its subcellular location is the membrane. It catalyses the reaction K(+)(in) = K(+)(out). Heteromultimer composed of KCNJ3/GIRK1 and KCNJ5/GIRK4 is activated by phosphatidylinositol 4,5 biphosphate (PtdIns(4,5)P2). In terms of biological role, inward rectifier potassium channels are characterized by a greater tendency to allow potassium to flow into the cell rather than out of it. Their voltage dependence is regulated by the concentration of extracellular potassium; as external potassium is raised, the voltage range of the channel opening shifts to more positive voltages. The inward rectification is mainly due to the blockage of outward current by internal magnesium. This potassium channel is controlled by G proteins. This receptor plays a crucial role in regulating the heartbeat. The chain is G protein-activated inward rectifier potassium channel 1 (KCNJ3) from Homo sapiens (Human).